We begin with the raw amino-acid sequence, 543 residues long: uncharacterized protein (543 aa).

Transmembrane regions (helical) follow at residues 47–67 (FSLL…PSLV), 79–99 (GGMV…AFAL), 126–146 (AFLS…GFAS), 176–196 (IYVA…KFLA), 198–218 (FSSF…ISLA), and 249–269 (FILC…CATI). An N-linked (GlcNAc...) asparagine glycan is attached at Asn275. The next 3 helical transmembrane spans lie at 282–302 (IAII…MITI), 335–355 (AVGV…ALCL), and 384–404 (IPLN…LLML). N-linked (GlcNAc...) asparagine glycosylation is present at Asn406. 3 helical membrane passes run 410–430 (ISSI…LPLV), 452–472 (ISIV…FPSY), and 480–500 (MNWA…YYYL). Asn519 is a glycosylation site (N-linked (GlcNAc...) asparagine).

This sequence belongs to the amino acid-polyamine-organocation (APC) superfamily.

Its subcellular location is the membrane. This is an uncharacterized protein from Schizosaccharomyces pombe (strain 972 / ATCC 24843) (Fission yeast).